A 177-amino-acid chain; its full sequence is Pyruvate synthase subunit PorC (177 aa).

As to quaternary structure, heterotetramer of one alpha, one beta, one delta and one gamma chain.

It carries out the reaction 2 oxidized [2Fe-2S]-[ferredoxin] + pyruvate + CoA = 2 reduced [2Fe-2S]-[ferredoxin] + acetyl-CoA + CO2 + H(+). This Methanothermobacter marburgensis (strain ATCC BAA-927 / DSM 2133 / JCM 14651 / NBRC 100331 / OCM 82 / Marburg) (Methanobacterium thermoautotrophicum) protein is Pyruvate synthase subunit PorC (porC).